A 101-amino-acid chain; its full sequence is Glutaredoxin-1 (101 aa).

The Glutaredoxin domain occupies 5–101; that stretch reads KDRVEKLIQT…GSLSKMIAAL (97 aa). C25 and C28 are joined by a disulfide.

It belongs to the glutaredoxin family.

It localises to the cytoplasm. It is found in the cytosol. Multifunctional enzyme with glutathione-dependent oxidoreductase, glutathione peroxidase and glutathione S-transferase (GST) activity. The disulfide bond functions as an electron carrier in the glutathione-dependent synthesis of deoxyribonucleotides by the enzyme ribonucleotide reductase. In addition, it is also involved in reducing cytosolic protein- and non-protein-disulfides in a coupled system with glutathione reductase. May play a role in protection against oxidative stress caused by superoxide in vivo by regulating the redox state of the protein sulfhydryl groups. The chain is Glutaredoxin-1 from Rhizophagus irregularis (strain DAOM 181602 / DAOM 197198 / MUCL 43194) (Arbuscular mycorrhizal fungus).